The following is a 643-amino-acid chain: Inorganic pyrophosphatase TTM1 (643 aa).

The N-terminal 15 residues, 1 to 15, are a transit peptide targeting the mitochondrion; it reads MALDSSVALSPRRRH. The 163-residue stretch at 248–410 folds into the CYTH domain; the sequence is NPTYILKSSK…PHTYIEQIQL (163 aa). The helical transmembrane segment at 618–638 threads the bilayer; that stretch reads LESSTVPILLGLAIGCVGIFA.

Mg(2+) serves as cofactor. As to expression, ubiquitously expressed in all tissues, with strong expression detected in senescent leaves.

The protein localises to the mitochondrion outer membrane. It carries out the reaction diphosphate + H2O = 2 phosphate + H(+). Its function is as follows. Exhibits pyrophosphatase activity with stronger affinity for pyrophosphate (PPi), moderate affinity for ATP and ADP, and weak affinity for tripolyphosphate (PPPi). No activity observed toward uridine substrate. Positively regulates natural and dark-induced leaf senescence. The chain is Inorganic pyrophosphatase TTM1 from Arabidopsis thaliana (Mouse-ear cress).